The sequence spans 309 residues: HTH-type transcriptional activator AaeR (309 aa).

The 59-residue stretch at 1–59 (MERLKRMSVFAKVVEFGSFTAAARQLQMSVSSISQTVSKLEDELQVKLLNRSTRSIGLT) folds into the HTH lysR-type domain. The segment at residues 19–38 (FTAAARQLQMSVSSISQTVS) is a DNA-binding region (H-T-H motif).

This sequence belongs to the LysR transcriptional regulatory family.

Its activity is regulated as follows. Activity is regulated by p-hydroxybenzoic acid. Transcriptional regulator that activates expression of the aaeXAB operon, which is involved in the efflux of aromatic carboxylic acids such as p-hydroxybenzoic acid (pHBA). In the presence of the effector pHBA, acts by binding to a single target within the aaeXAB-aaeR intergenic region. In the absence of pHBA, binds more than 50 sites along the E.coli K12 genome, including genes related to biofilm formation and several genes involved in stress response, suggesting that it might play a role in quorum sensing in the absence of pHBA. In Escherichia coli (strain K12), this protein is HTH-type transcriptional activator AaeR.